Reading from the N-terminus, the 160-residue chain is 6,7-dimethyl-8-ribityllumazine synthase (160 aa).

5-amino-6-(D-ribitylamino)uracil-binding positions include Trp26, 59–61 (AVE), and 81–83 (VVI). 86 to 87 (GT) contacts (2S)-2-hydroxy-3-oxobutyl phosphate. The active-site Proton donor is His89. 5-amino-6-(D-ribitylamino)uracil is bound at residue Phe114. Residue Arg128 participates in (2S)-2-hydroxy-3-oxobutyl phosphate binding.

This sequence belongs to the DMRL synthase family.

The catalysed reaction is (2S)-2-hydroxy-3-oxobutyl phosphate + 5-amino-6-(D-ribitylamino)uracil = 6,7-dimethyl-8-(1-D-ribityl)lumazine + phosphate + 2 H2O + H(+). Its pathway is cofactor biosynthesis; riboflavin biosynthesis; riboflavin from 2-hydroxy-3-oxobutyl phosphate and 5-amino-6-(D-ribitylamino)uracil: step 1/2. Catalyzes the formation of 6,7-dimethyl-8-ribityllumazine by condensation of 5-amino-6-(D-ribitylamino)uracil with 3,4-dihydroxy-2-butanone 4-phosphate. This is the penultimate step in the biosynthesis of riboflavin. This is 6,7-dimethyl-8-ribityllumazine synthase from Frankia casuarinae (strain DSM 45818 / CECT 9043 / HFP020203 / CcI3).